The sequence spans 380 residues: 1-deoxy-D-xylulose 5-phosphate reductoisomerase (380 aa).

NADPH-binding residues include threonine 10, glycine 11, serine 12, isoleucine 13, glycine 35, arginine 36, asparagine 37, and asparagine 121. Lysine 122 is a 1-deoxy-D-xylulose 5-phosphate binding site. Glutamate 123 provides a ligand contact to NADPH. Residue aspartate 147 participates in Mn(2+) binding. 1-deoxy-D-xylulose 5-phosphate is bound by residues serine 148, glutamate 149, serine 173, and histidine 196. Glutamate 149 is a binding site for Mn(2+). Glycine 202 is a binding site for NADPH. Positions 209, 214, 215, and 218 each coordinate 1-deoxy-D-xylulose 5-phosphate. Glutamate 218 is a Mn(2+) binding site.

Belongs to the DXR family. The cofactor is Mg(2+). It depends on Mn(2+) as a cofactor.

It carries out the reaction 2-C-methyl-D-erythritol 4-phosphate + NADP(+) = 1-deoxy-D-xylulose 5-phosphate + NADPH + H(+). The protein operates within isoprenoid biosynthesis; isopentenyl diphosphate biosynthesis via DXP pathway; isopentenyl diphosphate from 1-deoxy-D-xylulose 5-phosphate: step 1/6. Catalyzes the NADPH-dependent rearrangement and reduction of 1-deoxy-D-xylulose-5-phosphate (DXP) to 2-C-methyl-D-erythritol 4-phosphate (MEP). The sequence is that of 1-deoxy-D-xylulose 5-phosphate reductoisomerase from Agathobacter rectalis (strain ATCC 33656 / DSM 3377 / JCM 17463 / KCTC 5835 / VPI 0990) (Eubacterium rectale).